The following is a 330-amino-acid chain: Aspartate--ammonia ligase (330 aa).

It belongs to the class-II aminoacyl-tRNA synthetase family. AsnA subfamily.

The protein localises to the cytoplasm. The catalysed reaction is L-aspartate + NH4(+) + ATP = L-asparagine + AMP + diphosphate + H(+). The protein operates within amino-acid biosynthesis; L-asparagine biosynthesis; L-asparagine from L-aspartate (ammonia route): step 1/1. The sequence is that of Aspartate--ammonia ligase from Haemophilus influenzae (strain PittGG).